A 478-amino-acid chain; its full sequence is Probable cytosol aminopeptidase (478 aa).

2 residues coordinate Mn(2+): lysine 244 and aspartate 249. The active site involves lysine 256. Mn(2+)-binding residues include aspartate 267, aspartate 326, and glutamate 328. Arginine 330 is an active-site residue.

It belongs to the peptidase M17 family. Mn(2+) serves as cofactor.

The protein resides in the cytoplasm. The enzyme catalyses Release of an N-terminal amino acid, Xaa-|-Yaa-, in which Xaa is preferably Leu, but may be other amino acids including Pro although not Arg or Lys, and Yaa may be Pro. Amino acid amides and methyl esters are also readily hydrolyzed, but rates on arylamides are exceedingly low.. It catalyses the reaction Release of an N-terminal amino acid, preferentially leucine, but not glutamic or aspartic acids.. Presumably involved in the processing and regular turnover of intracellular proteins. Catalyzes the removal of unsubstituted N-terminal amino acids from various peptides. This Fusobacterium nucleatum subsp. nucleatum (strain ATCC 25586 / DSM 15643 / BCRC 10681 / CIP 101130 / JCM 8532 / KCTC 2640 / LMG 13131 / VPI 4355) protein is Probable cytosol aminopeptidase.